The primary structure comprises 1148 residues: Maintenance of telomere capping protein 5 (1148 aa).

5 WD repeats span residues 63–106 (HHIT…SNAI), 112–152 (GHSR…RPFY), 156–195 (SWRS…TPLC), 199–239 (GHVS…TESK), and 299–348 (GHSD…YGKV). The RWD domain occupies 432–543 (EEVSAIGHKF…RFVLGEKVSL (112 aa)). S759 carries the post-translational modification Phosphoserine. A disordered region spans residues 963-990 (THNTLNGSSKFTEPAQKQGSRAISSSPF). The segment covering 964-990 (HNTLNGSSKFTEPAQKQGSRAISSSPF) has biased composition (polar residues).

This sequence belongs to the WD repeat WDR59 family. In terms of assembly, component of the SEA complex composed of at least IML1/SEA1, RTC1/SEA2, MTC5/SEA3, NPR2, NPR3, SEA4, SEC13 and SEH1.

It localises to the vacuole membrane. Component of the SEA complex which coats the vacuolar membrane and is involved in intracellular trafficking, autophagy, response to nitrogen starvation, and amino acid biogenesis. May be involved in telomere capping. The polypeptide is Maintenance of telomere capping protein 5 (MTC5) (Saccharomyces cerevisiae (strain ATCC 204508 / S288c) (Baker's yeast)).